Here is a 304-residue protein sequence, read N- to C-terminus: Dihydroorotate dehydrogenase B (NAD(+)), catalytic subunit (304 aa).

Residues Ser22 and Lys46–Gly47 contribute to the FMN site. Residues Lys46 and Asn70–Leu74 each bind substrate. FMN is bound by residues Asn100 and Asn128. Residue Asn128 coordinates substrate. The Nucleophile role is filled by Cys131. Positions 166 and 192 each coordinate FMN. Residue Asn193–Thr194 participates in substrate binding. Residues Gly218, Gly244–Gly245, and Gly266–Thr267 each bind FMN.

The protein belongs to the dihydroorotate dehydrogenase family. Type 1 subfamily. In terms of assembly, heterotetramer of 2 PyrK and 2 PyrD type B subunits. Requires FMN as cofactor.

It localises to the cytoplasm. It catalyses the reaction (S)-dihydroorotate + NAD(+) = orotate + NADH + H(+). The protein operates within pyrimidine metabolism; UMP biosynthesis via de novo pathway; orotate from (S)-dihydroorotate (NAD(+) route): step 1/1. Catalyzes the conversion of dihydroorotate to orotate with NAD(+) as electron acceptor. The protein is Dihydroorotate dehydrogenase B (NAD(+)), catalytic subunit (pyrD) of Trichlorobacter lovleyi (strain ATCC BAA-1151 / DSM 17278 / SZ) (Geobacter lovleyi).